The following is a 418-amino-acid chain: Secreted aspartic protease 5 (418 aa).

The signal sequence occupies residues 1 to 18 (MFLKNILSVLAFALLIDA). Positions 19 to 76 (APVKRSPGFVTLDFNVKRSLVDPDDPTVEAKRSPLFLEFTPSEFPVDETGRDGDVDKR) are cleaved as a propeptide — activation peptide. Residues 90-404 (YTADITVGSD…NLDDKKISMA (315 aa)) enclose the Peptidase A1 domain. Asp108 is a catalytic residue. 108 to 110 (DTG) lines the pepstatin A pocket. Residues Cys123 and Cys135 are joined by a disulfide bond. 161–162 (GD) is a binding site for pepstatin A. Glu268 contributes to the Zn(2+) binding site. The active site involves Asp294. A pepstatin A-binding site is contributed by 294–298 (DSGTT). A disulfide bridge links Cys332 with Cys370.

Belongs to the peptidase A1 family.

It localises to the secreted. It carries out the reaction Preferential cleavage at the carboxyl of hydrophobic amino acids, but fails to cleave 15-Leu-|-Tyr-16, 16-Tyr-|-Leu-17 and 24-Phe-|-Phe-25 of insulin B chain. Activates trypsinogen, and degrades keratin.. Its activity is regulated as follows. Inhibited by pepstatin A analogs. Functionally, secreted aspartic peptidases (SAPs) are a group of ten acidic hydrolases considered as key virulence factors. These enzymes supply the fungus with nutrient amino acids as well as are able to degrade the selected host's proteins involved in the immune defense. Moreover, acts toward human hemoglobin though limited proteolysis to generate a variety of antimicrobial hemocidins, enabling to compete with the other microorganisms of the same physiological niche using the microbicidal peptides generated from the host protein. The polypeptide is Secreted aspartic protease 5 (Candida albicans (strain SC5314 / ATCC MYA-2876) (Yeast)).